We begin with the raw amino-acid sequence, 370 residues long: DNA replication and repair protein RecF (370 aa).

30-37 (GENAQGKT) is an ATP binding site.

The protein belongs to the RecF family. In terms of assembly, recruited to foci following DNA damage; probably interacts with RecO.

The protein resides in the cytoplasm. Its subcellular location is the nucleoid. Functionally, the RecF protein is involved in DNA metabolism; it is required for DNA replication and normal SOS inducibility. RecF binds preferentially to single-stranded, linear DNA. It also seems to bind ATP. Is recruited to repair centers, foci that are the site of double-strand DNA break(s) after RecN and RecO; recruitment may depend on RecO. A positive modulator of RecA. The chain is DNA replication and repair protein RecF from Bacillus subtilis (strain 168).